Here is a 404-residue protein sequence, read N- to C-terminus: Argininosuccinate synthase (404 aa).

ATP-binding positions include 10–18 (AYSGGVDTS) and alanine 38. Position 89 (tyrosine 89) interacts with L-citrulline. Residue glycine 119 participates in ATP binding. Residues threonine 121, asparagine 125, and aspartate 126 each contribute to the L-aspartate site. Residue asparagine 125 participates in L-citrulline binding. Arginine 129, serine 177, serine 186, glutamate 262, and tyrosine 274 together coordinate L-citrulline.

It belongs to the argininosuccinate synthase family. Type 1 subfamily. In terms of assembly, homotetramer.

Its subcellular location is the cytoplasm. It catalyses the reaction L-citrulline + L-aspartate + ATP = 2-(N(omega)-L-arginino)succinate + AMP + diphosphate + H(+). Its pathway is amino-acid biosynthesis; L-arginine biosynthesis; L-arginine from L-ornithine and carbamoyl phosphate: step 2/3. The chain is Argininosuccinate synthase from Prochlorococcus marinus (strain MIT 9301).